The following is a 465-amino-acid chain: MAELDKIEVRDITRIERIGAHSHIRGLGLDDVLEARAVSQGMVGQKDARRAAGLVVQIVREGKIAGRCILLAGEPSTGKTAIAVGMAQALGNETPFTSMSGSEIYSLEMNKTEALSQALRKSIGVRIKEETEIIEGEVVEIQIDRPASGTGQKVGKVTIKTTDMETNYDLGNKIIECFMKEKIQAGDVITIDKASGKVSKLGRSFTRARDYDATGAQTRFVQCPEGELQKRKEVVHTVTLHEIDVINSRTHGFLALFAGDTGEIKQEVRDQINSKVMEWREEGKAEINPGVLFIDEAHMLDIECFSFLNRALESDMAPVVIMATNRGITKIRGTNYRSPHGIPIDLLDRMIIIRTVPYSAKEIKEILKIRCEEEDCQINNEALMVLGRIATETSLRYAIQSITTASLVSKRRKAAEITVEDIRKVYSLFLDEKRSSKIMKEYQDEYLFYDDSLSQAEQAMEVETN.

ATP is bound at residue 73-80 (GEPSTGKT).

This sequence belongs to the RuvB family. As to quaternary structure, forms homohexameric rings. May form a dodecamer with pont made of two stacked hexameric rings. Component of the chromatin remodeling Ino80 complex.

The protein localises to the nucleus. The enzyme catalyses ATP + H2O = ADP + phosphate + H(+). Its function is as follows. Acts as a transcriptional coactivator in Wg signaling. Functionally, proposed core component of the chromatin remodeling Ino80 complex which is involved in transcriptional regulation, DNA replication and probably DNA repair. The polypeptide is RuvB-like helicase 2 (Aedes aegypti (Yellowfever mosquito)).